Consider the following 359-residue polypeptide: uncharacterized protein (359 aa).

Disordered regions lie at residues 90–117, 132–161, and 235–359; these read QESP…PSRK, IKKE…GMTS, and TSME…THRR. Over residues 151–161 the composition is skewed to polar residues; that stretch reads TPGSCSSGMTS. The span at 245-259 shows a compositional bias: low complexity; the sequence is KPPTVKSPPTVKLPP. Positions 286 to 299 are enriched in basic and acidic residues; the sequence is EENKEVPKEAEHKP.

This is an uncharacterized protein from Homo sapiens (Human).